The sequence spans 762 residues: ATP-dependent RNA helicase SUV3 homolog, mitochondrial (762 aa).

The transit peptide at 1–36 (MQNTRRCISLICVTRQPPSLRATYGAVAAARCLHRA) directs the protein to the mitochondrion. Residues 181–321 (NARALTRKIV…ALELLQKICE (141 aa)) form the Helicase ATP-binding domain. 194 to 201 (GPTNSGKT) provides a ligand contact to ATP. The 178-residue stretch at 331 to 508 (RYDRLTELTV…PTADQIELYA (178 aa)) folds into the Helicase C-terminal domain. Residues 716-762 (EWDAQQVGQAAAASTSSKESQESPPDDSDDEDSYPGSYKKTRRKRRK) are disordered. The span at 721 to 730 (QVGQAAAAST) shows a compositional bias: polar residues. Over residues 739–748 (PPDDSDDEDS) the composition is skewed to acidic residues.

It belongs to the helicase family. The cofactor is Mg(2+). Mn(2+) is required as a cofactor.

The protein localises to the mitochondrion. It catalyses the reaction ATP + H2O = ADP + phosphate + H(+). Major helicase player in mitochondrial RNA metabolism and maintenance. Likely component of the mitochondrial degradosome (mtEXO) complex, that degrades 3' overhang double-stranded RNA with a 3'-to-5' directionality in an ATP-dependent manner. ATPase and ATP-dependent multisubstrate helicase, able to unwind double-stranded (ds) DNA and RNA, and RNA/DNA heteroduplexes in the 5'-to-3' direction. Regulates mRNA stability and is required for the correct processing and maturation of mitochondrial transcripts. The protein is ATP-dependent RNA helicase SUV3 homolog, mitochondrial of Drosophila pseudoobscura pseudoobscura (Fruit fly).